The sequence spans 510 residues: 2,3-bisphosphoglycerate-independent phosphoglycerate mutase (510 aa).

The Mn(2+) site is built by Asp-12 and Ser-62. Ser-62 functions as the Phosphoserine intermediate in the catalytic mechanism. Substrate contacts are provided by residues His-123, Arg-153 to Asp-154, Arg-185, Arg-191, Arg-260 to Arg-263, and Lys-335. Residues Asp-402, His-406, Asp-443, His-444, and His-461 each coordinate Mn(2+).

The protein belongs to the BPG-independent phosphoglycerate mutase family. Monomer. Mn(2+) serves as cofactor.

The catalysed reaction is (2R)-2-phosphoglycerate = (2R)-3-phosphoglycerate. It participates in carbohydrate degradation; glycolysis; pyruvate from D-glyceraldehyde 3-phosphate: step 3/5. In terms of biological role, catalyzes the interconversion of 2-phosphoglycerate and 3-phosphoglycerate. This chain is 2,3-bisphosphoglycerate-independent phosphoglycerate mutase, found in Listeria monocytogenes serovar 1/2a (strain ATCC BAA-679 / EGD-e).